Here is a 269-residue protein sequence, read N- to C-terminus: Probable membrane transporter protein YfcA (269 aa).

At 1-7 the chain is on the periplasmic side; the sequence is METFNSL. A helical transmembrane segment spans residues 8–28; it reads FMVSPLLLGVLFFVAMLAGFI. Topologically, residues 29-30 are cytoplasmic; it reads DS. A helical membrane pass occupies residues 31–51; it reads IAGGGGLLTIPALMAAGMSPA. The Periplasmic segment spans residues 52-84; it reads NALATNKLQACGGSISATIYFIRRKVVSLSDQK. A helical transmembrane segment spans residues 85 to 105; it reads LNIAMTFVGSMSGALLVQYVQ. Topologically, residues 106 to 111 are cytoplasmic; that stretch reads ADVLRQ. A helical membrane pass occupies residues 112–132; it reads ILPILVICIGLYFLLMPKLGE. Residues 133-156 are Periplasmic-facing; it reads EDRQRRMYGLPFALIAGGCVGFYD. The helical transmembrane segment at 157–177 threads the bilayer; it reads GFFGPAAGSFYALAFVTLCGF. Residues 178–197 lie on the Cytoplasmic side of the membrane; the sequence is NLAKATAHAKLLNATSNIGG. The helical transmembrane segment at 198-218 threads the bilayer; the sequence is LLLFILGGKVIWATGFVMLVG. Residues 219–269 are Periplasmic-facing; sequence QFLGARMGSRLVLSKGQKLIRPMIVIVSAVMSAKLLYDSHGQEILHWLGMN.

It belongs to the 4-toluene sulfonate uptake permease (TSUP) (TC 2.A.102) family.

It is found in the cell inner membrane. The protein is Probable membrane transporter protein YfcA (yfcA) of Escherichia coli O157:H7.